The following is a 314-amino-acid chain: Acetaldehyde dehydrogenase 2 (314 aa).

15–18 (SGNI) is an NAD(+) binding site. The Acyl-thioester intermediate role is filled by Cys-133. NAD(+) contacts are provided by residues 164 to 172 (SAGPGTRQN) and Asn-289.

It belongs to the acetaldehyde dehydrogenase family.

It carries out the reaction acetaldehyde + NAD(+) + CoA = acetyl-CoA + NADH + H(+). The protein is Acetaldehyde dehydrogenase 2 of Nocardioides sp. (strain ATCC BAA-499 / JS614).